The sequence spans 309 residues: MIYLAGGCFWGVEEYFSQVDGVLDAVSGYANGRGDTTNYQLIHQTGHAETVEVAYDTNRISLKELLLHFFRIIDPTSLNKQGNDRGSQYRTGIYYTDKADLAIIDEVFKEKAKDYKKKIVVEKAPLKHFIKAEDYHQDYLKKNPNGYCHIDINQATYPVIDESKYPKPSATEIKEKLSADEYRVTQKNETEKAFSNRYWDSFDAGIYVDVVTGEPLFSSKDKFESGCGWPSFSRPISPDVVRYKEDKSFNMTRTEVRSRSGNSHLGHVFTDGPKDQGGLRYCINSLSITFIPKADMEAKGYGYLLSSVE.

The peptide methionine sulfoxide reductase A stretch occupies residues 1–153 (MIYLAGGCFW…PNGYCHIDIN (153 aa)). Cys8 is an active-site residue. The MsrB domain maps to 170-293 (ATEIKEKLSA…NSLSITFIPK (124 aa)). Cys282 serves as the catalytic Nucleophile.

It in the N-terminal section; belongs to the MsrA Met sulfoxide reductase family. This sequence in the C-terminal section; belongs to the MsrB Met sulfoxide reductase family.

It catalyses the reaction L-methionyl-[protein] + [thioredoxin]-disulfide + H2O = L-methionyl-(S)-S-oxide-[protein] + [thioredoxin]-dithiol. The enzyme catalyses [thioredoxin]-disulfide + L-methionine + H2O = L-methionine (S)-S-oxide + [thioredoxin]-dithiol. The catalysed reaction is L-methionyl-[protein] + [thioredoxin]-disulfide + H2O = L-methionyl-(R)-S-oxide-[protein] + [thioredoxin]-dithiol. Has an important function as a repair enzyme for proteins that have been inactivated by oxidation. Catalyzes the reversible oxidation-reduction of methionine sulfoxide in proteins to methionine. This is Peptide methionine sulfoxide reductase MsrA/MsrB (msrAB) from Streptococcus pyogenes serotype M18 (strain MGAS8232).